Reading from the N-terminus, the 425-residue chain is Multifunctional CCA protein (425 aa).

Positions 8 and 11 each coordinate ATP. 2 residues coordinate CTP: Gly-8 and Arg-11. 2 residues coordinate Mg(2+): Asp-21 and Asp-23. The ATP site is built by Arg-91, Arg-141, and Arg-144. The CTP site is built by Arg-91, Arg-141, and Arg-144. In terms of domain architecture, HD spans 230–331 (TGVHLMMVLD…VRLLERCDAI (102 aa)).

It belongs to the tRNA nucleotidyltransferase/poly(A) polymerase family. Bacterial CCA-adding enzyme type 1 subfamily. In terms of assembly, monomer. Can also form homodimers and oligomers. The cofactor is Mg(2+). Ni(2+) serves as cofactor.

The enzyme catalyses a tRNA precursor + 2 CTP + ATP = a tRNA with a 3' CCA end + 3 diphosphate. The catalysed reaction is a tRNA with a 3' CCA end + 2 CTP + ATP = a tRNA with a 3' CCACCA end + 3 diphosphate. Its function is as follows. Catalyzes the addition and repair of the essential 3'-terminal CCA sequence in tRNAs without using a nucleic acid template. Adds these three nucleotides in the order of C, C, and A to the tRNA nucleotide-73, using CTP and ATP as substrates and producing inorganic pyrophosphate. tRNA 3'-terminal CCA addition is required both for tRNA processing and repair. Also involved in tRNA surveillance by mediating tandem CCA addition to generate a CCACCA at the 3' terminus of unstable tRNAs. While stable tRNAs receive only 3'-terminal CCA, unstable tRNAs are marked with CCACCA and rapidly degraded. The protein is Multifunctional CCA protein of Acidovorax ebreus (strain TPSY) (Diaphorobacter sp. (strain TPSY)).